The chain runs to 146 residues: Holo-[acyl-carrier-protein] synthase (146 aa).

Mg(2+) contacts are provided by aspartate 9 and glutamate 58.

It belongs to the P-Pant transferase superfamily. AcpS family. It depends on Mg(2+) as a cofactor.

Its subcellular location is the cytoplasm. It carries out the reaction apo-[ACP] + CoA = holo-[ACP] + adenosine 3',5'-bisphosphate + H(+). In terms of biological role, transfers the 4'-phosphopantetheine moiety from coenzyme A to a Ser of acyl-carrier-protein. The chain is Holo-[acyl-carrier-protein] synthase from Baumannia cicadellinicola subsp. Homalodisca coagulata.